The sequence spans 322 residues: Phosphatidylserine decarboxylase proenzyme (322 aa).

Catalysis depends on charge relay system; for autoendoproteolytic cleavage activity residues Asp-90, His-147, and Ser-254. Residue Ser-254 is the Schiff-base intermediate with substrate; via pyruvic acid; for decarboxylase activity of the active site. Ser-254 carries the post-translational modification Pyruvic acid (Ser); by autocatalysis. The interval 294-322 (EVEPAPLPADEIKAEHDASPLVDNKKDDT) is disordered. Residues 303-322 (DEIKAEHDASPLVDNKKDDT) are compositionally biased toward basic and acidic residues.

The protein belongs to the phosphatidylserine decarboxylase family. PSD-B subfamily. Prokaryotic type I sub-subfamily. Heterodimer of a large membrane-associated beta subunit and a small pyruvoyl-containing alpha subunit. Pyruvate serves as cofactor. Is synthesized initially as an inactive proenzyme. Formation of the active enzyme involves a self-maturation process in which the active site pyruvoyl group is generated from an internal serine residue via an autocatalytic post-translational modification. Two non-identical subunits are generated from the proenzyme in this reaction, and the pyruvate is formed at the N-terminus of the alpha chain, which is derived from the carboxyl end of the proenzyme. The autoendoproteolytic cleavage occurs by a canonical serine protease mechanism, in which the side chain hydroxyl group of the serine supplies its oxygen atom to form the C-terminus of the beta chain, while the remainder of the serine residue undergoes an oxidative deamination to produce ammonia and the pyruvoyl prosthetic group on the alpha chain. During this reaction, the Ser that is part of the protease active site of the proenzyme becomes the pyruvoyl prosthetic group, which constitutes an essential element of the active site of the mature decarboxylase.

Its subcellular location is the cell membrane. It catalyses the reaction a 1,2-diacyl-sn-glycero-3-phospho-L-serine + H(+) = a 1,2-diacyl-sn-glycero-3-phosphoethanolamine + CO2. Its pathway is phospholipid metabolism; phosphatidylethanolamine biosynthesis; phosphatidylethanolamine from CDP-diacylglycerol: step 2/2. Its function is as follows. Catalyzes the formation of phosphatidylethanolamine (PtdEtn) from phosphatidylserine (PtdSer). This chain is Phosphatidylserine decarboxylase proenzyme, found in Salmonella paratyphi C (strain RKS4594).